The sequence spans 308 residues: Aspartate carbamoyltransferase catalytic subunit (308 aa).

The carbamoyl phosphate site is built by Arg-58 and Thr-59. Lys-86 contacts L-aspartate. Carbamoyl phosphate-binding residues include Arg-108, His-136, and Gln-139. Residues Arg-169 and Arg-227 each contribute to the L-aspartate site. Residues Gly-268 and Pro-269 each contribute to the carbamoyl phosphate site.

It belongs to the aspartate/ornithine carbamoyltransferase superfamily. ATCase family. In terms of assembly, heterododecamer (2C3:3R2) of six catalytic PyrB chains organized as two trimers (C3), and six regulatory PyrI chains organized as three dimers (R2).

The enzyme catalyses carbamoyl phosphate + L-aspartate = N-carbamoyl-L-aspartate + phosphate + H(+). The protein operates within pyrimidine metabolism; UMP biosynthesis via de novo pathway; (S)-dihydroorotate from bicarbonate: step 2/3. In terms of biological role, catalyzes the condensation of carbamoyl phosphate and aspartate to form carbamoyl aspartate and inorganic phosphate, the committed step in the de novo pyrimidine nucleotide biosynthesis pathway. The protein is Aspartate carbamoyltransferase catalytic subunit of Chloroflexus aggregans (strain MD-66 / DSM 9485).